Here is a 430-residue protein sequence, read N- to C-terminus: Methylenetetrahydrofolate--tRNA-(uracil-5-)-methyltransferase TrmFO (430 aa).

9–14 (GAGLAG) provides a ligand contact to FAD.

This sequence belongs to the MnmG family. TrmFO subfamily. FAD serves as cofactor.

The protein resides in the cytoplasm. The enzyme catalyses uridine(54) in tRNA + (6R)-5,10-methylene-5,6,7,8-tetrahydrofolate + NADH + H(+) = 5-methyluridine(54) in tRNA + (6S)-5,6,7,8-tetrahydrofolate + NAD(+). It carries out the reaction uridine(54) in tRNA + (6R)-5,10-methylene-5,6,7,8-tetrahydrofolate + NADPH + H(+) = 5-methyluridine(54) in tRNA + (6S)-5,6,7,8-tetrahydrofolate + NADP(+). In terms of biological role, catalyzes the folate-dependent formation of 5-methyl-uridine at position 54 (M-5-U54) in all tRNAs. The polypeptide is Methylenetetrahydrofolate--tRNA-(uracil-5-)-methyltransferase TrmFO (Fervidobacterium nodosum (strain ATCC 35602 / DSM 5306 / Rt17-B1)).